The primary structure comprises 473 residues: Cell division protein FtsP (473 aa).

The tat-type signal signal peptide spans 1–27 (MSLSRRQFIQASGLAMCLGALPFAVQA).

It belongs to the FtsP family. Post-translationally, predicted to be exported by the Tat system. The position of the signal peptide cleavage has not been experimentally proven.

The protein resides in the periplasm. Cell division protein that is required for growth during stress conditions. May be involved in protecting or stabilizing the divisomal assembly under conditions of stress. The protein is Cell division protein FtsP of Xenorhabdus nematophila (strain ATCC 19061 / DSM 3370 / CCUG 14189 / LMG 1036 / NCIMB 9965 / AN6).